The sequence spans 499 residues: Neuropeptide CCHamide-1 receptor (499 aa).

The Extracellular segment spans residues 1–85 (MIANLVSMET…GRRPETYIVP (85 aa)). Residues asparagine 33 and asparagine 61 are each glycosylated (N-linked (GlcNAc...) asparagine). Residues 86-106 (ILFALIFVVGVLGNGTLIVVF) traverse the membrane as a helical segment. Residues 107–117 (LSVRQMRNVPN) lie on the Cytoplasmic side of the membrane. Residues 118–138 (TYILSLALADLLVIITTVPLA) form a helical membrane-spanning segment. Residues 139–162 (STVYTVEYWPYGSFLCSLSEFMKD) lie on the Extracellular side of the membrane. Cysteine 154 and cysteine 240 are disulfide-bonded. The chain crosses the membrane as a helical span at residues 163–183 (VSIGVSVFTLTALSGDRYFAI). Over 184–203 (VDPLRKFHAHGGGRRATRMT) the chain is Cytoplasmic. The helical transmembrane segment at 204–224 (LATAVSIWLLAILCGLPALIG) threads the bilayer. The Extracellular segment spans residues 225-259 (SNLKHLGINEKSIVICYPYPEEWGINYAKSMVLLH). Residues 260 to 280 (FLVYYAIPLVVIAVFYVLIAL) traverse the membrane as a helical segment. The Cytoplasmic portion of the chain corresponds to 281–309 (HLMYSASVPGEIQGAVRQVRARRKVAVTV). The helical transmembrane segment at 310 to 330 (LAFVVIFGICFLPYHVFFLWF) threads the bilayer. The Extracellular portion of the chain corresponds to 331–348 (YFWPTAQDDYNAFWHVLR). A helical membrane pass occupies residues 349-369 (IVAYCMSFANSCANPVALYFV). Over 370-499 (SGAFRKHFNR…PAKFQESLLN (130 aa)) the chain is Cytoplasmic.

The protein belongs to the G-protein coupled receptor 1 family. In terms of tissue distribution, low levels in larval brain and gut with higher levels in adult brain and gut. In the brain expression is widely distributed, including strong expression in the mushroom bodies. Expressed weakly in s-LNv (small ventral lateral neurons) and strongly in l-LNv (large ventral lateral neurons), but not in other clock neurons.

It localises to the cell membrane. Receptor for the neuropeptide CCHamide-1. Plays a role in the modulation of starvation-induced olfactory behavior where starved flies show increased responsiveness to food odorants, repellants and pheromones. Contributes to regulation of sleep latency (the time required to fall asleep), amount of sleep and depth of sleep (arousability). Involved in modulation of PDP1 and PDF levels in s-LNv (small ventral lateral neurons) clock neurons in response to CCHa1 released by DN1a (anterior dorsal neurons 1) clock neurons, to regulate morning activity. In a subset of dopaminergic cells in the protocerebral anterior medial (PAM) cluster involved in suppressing arousability in response to CCHa1 secreted by gut enteroendocrine cells. This chain is Neuropeptide CCHamide-1 receptor, found in Drosophila melanogaster (Fruit fly).